The sequence spans 105 residues: Platelet factor 4 (105 aa).

The N-terminal stretch at 1–29 is a signal peptide; sequence MSAAAVFRGLRPSPELLLLGLLLLPAVVA. An O-linked (GalNAc...) threonine; partial glycan is attached at Thr-31. 2 disulfide bridges follow: Cys-44–Cys-71 and Cys-46–Cys-87. Ser-61 bears the Phosphoserine mark. Residue 96 to 102 coordinates heparin; it reads KKIIKKL.

Belongs to the intercrine alpha (chemokine CxC) family. Homotetramer. Interacts with TNFAIP6 (via Link domain). Interacts with CCR1. Interacts with CXCR3. Interacts with THBD; this interaction enhances generation of activated protein C. O-linked glycan consists of Gal-GalNAc disaccharide which is modified with sialic acid residues (microheterogeneity).

The protein resides in the secreted. Its function is as follows. Chemokine released during platelet aggregation that plays a role in different biological processes including hematopoiesis, cell proliferation, differentiation, and activation. Acts via different functional receptors including CCR1, CXCR3A or CXCR3B. Upon interaction with CXCR3A receptor, induces activated T-lymphocytes migration mediated via downstream Ras/extracellular signal-regulated kinase (ERK) signaling. Neutralizes the anticoagulant effect of heparin by binding more strongly to heparin than to the chondroitin-4-sulfate chains of the carrier molecule. Plays a role in the inhibition of hematopoiesis and in the maintenance of hematopoietic stem cell (HSC) quiescence. Chemotactic for neutrophils and monocytes via CCR1. Inhibits endothelial cell proliferation. In cooperation with toll-like receptor 8/TLR8, induces chromatin remodeling and activates inflammatory gene expression via the TBK1-IRF5 axis. In addition, induces myofibroblast differentiation and collagen synthesis in different precursor cells, including endothelial cells, by stimulating endothelial-to-mesenchymal transition. Interacts with thrombomodulin/THBD to enhance the activation of protein C and thus potentiates its anticoagulant activity. The polypeptide is Platelet factor 4 (Pf4) (Rattus norvegicus (Rat)).